Here is a 211-residue protein sequence, read N- to C-terminus: Probable GTP-binding protein EngB (211 aa).

Residues 26–200 (SGIEVAFAGR…RQKLDNWFST (175 aa)) form the EngB-type G domain. GTP-binding positions include 34–41 (GRSNAGKS), 61–65 (GRTQL), 79–82 (DLPG), 146–149 (TKAD), and 179–181 (FSS). Residues Ser41 and Thr63 each contribute to the Mg(2+) site.

It belongs to the TRAFAC class TrmE-Era-EngA-EngB-Septin-like GTPase superfamily. EngB GTPase family. Mg(2+) serves as cofactor.

Its function is as follows. Necessary for normal cell division and for the maintenance of normal septation. This is Probable GTP-binding protein EngB from Pectobacterium carotovorum subsp. carotovorum (strain PC1).